We begin with the raw amino-acid sequence, 206 residues long: Ribosomal RNA small subunit methyltransferase G (206 aa).

S-adenosyl-L-methionine-binding positions include glycine 74, leucine 79, 125–126 (VE), and arginine 140.

This sequence belongs to the methyltransferase superfamily. RNA methyltransferase RsmG family.

The protein localises to the cytoplasm. It catalyses the reaction guanosine(527) in 16S rRNA + S-adenosyl-L-methionine = N(7)-methylguanosine(527) in 16S rRNA + S-adenosyl-L-homocysteine. Specifically methylates the N7 position of guanine in position 527 of 16S rRNA. This is Ribosomal RNA small subunit methyltransferase G from Shewanella sp. (strain MR-4).